Here is a 123-residue protein sequence, read N- to C-terminus: Large ribosomal subunit protein uL14 (123 aa).

Belongs to the universal ribosomal protein uL14 family. Part of the 50S ribosomal subunit. Forms a cluster with proteins L3 and L19. In the 70S ribosome, L14 and L19 interact and together make contacts with the 16S rRNA in bridges B5 and B8.

In terms of biological role, binds to 23S rRNA. Forms part of two intersubunit bridges in the 70S ribosome. The protein is Large ribosomal subunit protein uL14 of Wigglesworthia glossinidia brevipalpis.